Reading from the N-terminus, the 430-residue chain is Histidinol dehydrogenase (430 aa).

Ser237, Gln259, and His262 together coordinate substrate. Gln259 and His262 together coordinate Zn(2+). Active-site proton acceptor residues include Glu327 and His328. Substrate is bound by residues His328, Asp361, Glu415, and His420. Asp361 is a binding site for Zn(2+). His420 is a binding site for Zn(2+).

The protein belongs to the histidinol dehydrogenase family. Zn(2+) is required as a cofactor.

The catalysed reaction is L-histidinol + 2 NAD(+) + H2O = L-histidine + 2 NADH + 3 H(+). It participates in amino-acid biosynthesis; L-histidine biosynthesis; L-histidine from 5-phospho-alpha-D-ribose 1-diphosphate: step 9/9. Catalyzes the sequential NAD-dependent oxidations of L-histidinol to L-histidinaldehyde and then to L-histidine. This chain is Histidinol dehydrogenase, found in Sulfurimonas denitrificans (strain ATCC 33889 / DSM 1251) (Thiomicrospira denitrificans (strain ATCC 33889 / DSM 1251)).